Consider the following 372-residue polypeptide: Galanin receptor type 2 (372 aa).

At 1–28 the chain is on the extracellular side; that stretch reads MNGSGSQGAENTSQEGGSGGWQPEAVLV. N2 and N11 each carry an N-linked (GlcNAc...) asparagine glycan. Residues 29 to 49 traverse the membrane as a helical segment; sequence PLFFALIFLVGTVGNALVLAV. The Cytoplasmic segment spans residues 50–60; sequence LLRGGQAVSTT. Residues 61–81 form a helical membrane-spanning segment; the sequence is NLFILNLGVADLCFILCCVPF. The Extracellular segment spans residues 82–99; that stretch reads QATIYTLDDWVFGSLLCK. C98 and C175 are disulfide-bonded. A helical membrane pass occupies residues 100-121; sequence AVHFLIFLTMHASSFTLAAVSL. Residues 122 to 141 are Cytoplasmic-facing; the sequence is DRYLAIRYPLHSRELRTPRN. Residues 142–162 traverse the membrane as a helical segment; sequence ALAAIGLIWGLALLFSGPYLS. At 163–187 the chain is on the extracellular side; that stretch reads YYRQSQLANLTVCHPAWSAPRRRAM. Residues 188–208 form a helical membrane-spanning segment; sequence DLCTFVFSYLLPVLVLSLTYA. Residues 209 to 237 lie on the Cytoplasmic side of the membrane; sequence RTLRYLWRTVDPVTAGSGSQRAKRKVTRM. A helical membrane pass occupies residues 238 to 258; that stretch reads IIIVAVLFCLCWMPHHALILC. The Extracellular portion of the chain corresponds to 259 to 260; it reads VW. A helical transmembrane segment spans residues 261 to 281; that stretch reads FGRFPLTRATYALRILSHLVS. Residues 282-372 are Cytoplasmic-facing; that stretch reads YANSCVNPIV…ASSRTLDPAC (91 aa). The disordered stretch occupies residues 353 to 372; sequence VPPPALPNCTASSRTLDPAC. Residues 361–372 show a composition bias toward polar residues; that stretch reads CTASSRTLDPAC.

It belongs to the G-protein coupled receptor 1 family.

It is found in the cell membrane. Its function is as follows. Receptor for the hormone galanin, GALP and spexin-1. The activity of this receptor is mediated by G proteins that activate the phospholipase C/protein kinase C pathway (via G(q)) and that inhibit adenylyl cyclase (via G(i)). The chain is Galanin receptor type 2 (Galr2) from Rattus norvegicus (Rat).